Reading from the N-terminus, the 552-residue chain is Phosphoglucomutase (552 aa).

The active-site Phosphoserine intermediate is the Ser-143. Mg(2+) contacts are provided by Ser-143, Asp-295, Asp-297, and Asp-299.

It belongs to the phosphohexose mutase family. Mg(2+) serves as cofactor.

The enzyme catalyses alpha-D-glucose 1-phosphate = alpha-D-glucose 6-phosphate. The protein operates within glycolipid metabolism; diglucosyl-diacylglycerol biosynthesis. Catalyzes the interconversion between glucose-6-phosphate and alpha-glucose-1-phosphate. This is the first step in the biosynthesis of diglucosyl-diacylglycerol (Glc2-DAG), i.e. the predominant glycolipid found in the S.aureus membrane, which is also used as a membrane anchor for lipoteichoic acid (LTA). In Staphylococcus aureus (strain USA300), this protein is Phosphoglucomutase (pgcA).